Reading from the N-terminus, the 20-residue chain is Phospholipase A2 II-5b (20 aa).

The protein belongs to the phospholipase A2 family. Group I subfamily. It depends on Ca(2+) as a cofactor. Expressed by the venom gland.

The protein localises to the secreted. It catalyses the reaction a 1,2-diacyl-sn-glycero-3-phosphocholine + H2O = a 1-acyl-sn-glycero-3-phosphocholine + a fatty acid + H(+). Its function is as follows. Snake venom phospholipase A2 (PLA2) that exhibits weak enzymatic activity. PLA2 catalyzes the calcium-dependent hydrolysis of the 2-acyl groups in 3-sn-phosphoglycerides. This Notechis scutatus scutatus (Mainland tiger snake) protein is Phospholipase A2 II-5b.